The primary structure comprises 556 residues: Energy-dependent translational throttle protein EttA (556 aa).

ABC transporter domains lie at 7 to 260 (YTMH…EQEQ) and 325 to 551 (IEVQ…RIKY). 40–47 (GLNGAGKS) serves as a coordination point for ATP. Residues 96–140 (SEVKNALTRLDEVYALYADPDADFDKLAAEQANLEAIIQAHDGHN) are arm. Residues 243-323 (GNYSSWLEQK…IPPGPRLGDK (81 aa)) are ptIM. Position 357–364 (357–364 (GANGAGKS)) interacts with ATP.

The protein belongs to the ABC transporter superfamily. ABCF family. Translational throttle EttA subfamily. In terms of assembly, monomer. Probably contacts ribosomal proteins L1, L5, L33 and S7, the 16S and 23S rRNA and the P-site containing tRNA(fMet).

The protein resides in the cytoplasm. It catalyses the reaction ATP + H2O = ADP + phosphate + H(+). In terms of biological role, a translation factor that gates the progression of the 70S ribosomal initiation complex (IC, containing tRNA(fMet) in the P-site) into the translation elongation cycle by using a mechanism sensitive to the ATP/ADP ratio. Binds to the 70S ribosome E-site where it modulates the state of the translating ribosome during subunit translocation. ATP hydrolysis probably frees it from the ribosome, which can enter the elongation phase. In Haemophilus influenzae (strain ATCC 51907 / DSM 11121 / KW20 / Rd), this protein is Energy-dependent translational throttle protein EttA.